The chain runs to 297 residues: Probable porphobilinogen deaminase (297 aa).

Position 233 is an S-(dipyrrolylmethanemethyl)cysteine (C233).

Belongs to the HMBS family. Dipyrromethane is required as a cofactor.

The catalysed reaction is 4 porphobilinogen + H2O = hydroxymethylbilane + 4 NH4(+). The protein operates within porphyrin-containing compound metabolism; protoporphyrin-IX biosynthesis; coproporphyrinogen-III from 5-aminolevulinate: step 2/4. Its function is as follows. Tetrapolymerization of the monopyrrole PBG into the hydroxymethylbilane pre-uroporphyrinogen in several discrete steps. The polypeptide is Probable porphobilinogen deaminase (Thermoplasma volcanium (strain ATCC 51530 / DSM 4299 / JCM 9571 / NBRC 15438 / GSS1)).